Consider the following 34-residue polypeptide: Photosystem II reaction center protein Psb30 (34 aa).

The helical transmembrane segment at 6 to 26 threads the bilayer; it reads VIGQLTSLAMIVLVGPAVIVV.

The protein belongs to the Psb30/Ycf12 family. PSII is composed of 1 copy each of membrane proteins PsbA, PsbB, PsbC, PsbD, PsbE, PsbF, PsbH, PsbI, PsbJ, PsbK, PsbL, PsbM, PsbT, PsbX, PsbY, PsbZ, Psb30/Ycf12, peripheral proteins of the oxygen-evolving complex and a large number of cofactors. It forms dimeric complexes.

The protein localises to the plastid. Its subcellular location is the chloroplast thylakoid membrane. A core subunit of photosystem II (PSII), probably helps stabilize the reaction center. The chain is Photosystem II reaction center protein Psb30 from Gracilaria tenuistipitata var. liui (Red alga).